The chain runs to 392 residues: Phosphopentomutase (392 aa).

6 residues coordinate Mn(2+): D15, D287, H292, D328, H329, and H340.

The protein belongs to the phosphopentomutase family. Mn(2+) serves as cofactor.

The protein localises to the cytoplasm. The catalysed reaction is 2-deoxy-alpha-D-ribose 1-phosphate = 2-deoxy-D-ribose 5-phosphate. It catalyses the reaction alpha-D-ribose 1-phosphate = D-ribose 5-phosphate. The protein operates within carbohydrate degradation; 2-deoxy-D-ribose 1-phosphate degradation; D-glyceraldehyde 3-phosphate and acetaldehyde from 2-deoxy-alpha-D-ribose 1-phosphate: step 1/2. Its function is as follows. Isomerase that catalyzes the conversion of deoxy-ribose 1-phosphate (dRib-1-P) and ribose 1-phosphate (Rib-1-P) to deoxy-ribose 5-phosphate (dRib-5-P) and ribose 5-phosphate (Rib-5-P), respectively. The sequence is that of Phosphopentomutase from Syntrophotalea carbinolica (strain DSM 2380 / NBRC 103641 / GraBd1) (Pelobacter carbinolicus).